A 518-amino-acid chain; its full sequence is Myosin-binding protein 7 (518 aa).

The region spanning 69–167 is the GTD-binding domain; the sequence is NELELLRETV…ALTFEAQAYK (99 aa). The interval 276–350 is disordered; sequence VVGQSPRHQR…DSSEIGDNDM (75 aa). Residues 291-301 show a composition bias toward low complexity; it reads STGSASSLLGT. The segment covering 310–320 has biased composition (polar residues); that stretch reads SNDSPRSNNGS. Ser-385 carries the phosphoserine modification. Residues 399 to 431 adopt a coiled-coil conformation; the sequence is EISKLYMRLQALEADRESMRQAIMSMRTEKAQM. The helical transmembrane segment at 458–477 threads the bilayer; it reads IIGAFNFISVFKWITSFVFW.

As to quaternary structure, interacts with myosin XI-I.

It is found in the endomembrane system. In terms of biological role, membrane-anchored myosin receptors that define a distinct, plant-specific transport vesicle compartment. This is Myosin-binding protein 7 from Arabidopsis thaliana (Mouse-ear cress).